A 250-amino-acid chain; its full sequence is Pyrroloquinoline-quinone synthase (250 aa).

It belongs to the PqqC family.

It carries out the reaction 6-(2-amino-2-carboxyethyl)-7,8-dioxo-1,2,3,4,7,8-hexahydroquinoline-2,4-dicarboxylate + 3 O2 = pyrroloquinoline quinone + 2 H2O2 + 2 H2O + H(+). It participates in cofactor biosynthesis; pyrroloquinoline quinone biosynthesis. Its function is as follows. Ring cyclization and eight-electron oxidation of 3a-(2-amino-2-carboxyethyl)-4,5-dioxo-4,5,6,7,8,9-hexahydroquinoline-7,9-dicarboxylic-acid to PQQ. The polypeptide is Pyrroloquinoline-quinone synthase (Pseudomonas aeruginosa (strain LESB58)).